A 292-amino-acid chain; its full sequence is Peroxisomal 2,4-dienoyl-CoA reductase [(3E)-enoyl-CoA-producing] (292 aa).

Alanine 2 is subject to N-acetylalanine. NADP(+) contacts are provided by residues glycine 35–isoleucine 40, arginine 60–arginine 64, and aspartate 86. Arginine 60 contributes to the substrate binding site. Residues arginine 88, phenylalanine 118, and serine 126–asparagine 128 each bind substrate. The residue at position 151 (lysine 151) is an N6-acetyllysine. NADP(+)-binding positions include lysine 182 and proline 208–threonine 214. Residue arginine 219 participates in substrate binding. Position 287 is a phosphoserine (serine 287). Positions alanine 290–leucine 292 match the Microbody targeting signal motif. N6-acetyllysine is present on lysine 291.

It belongs to the short-chain dehydrogenases/reductases (SDR) family. 2,4-dienoyl-CoA reductase subfamily. Monomer, dimer and oligomer.

Its subcellular location is the peroxisome. It catalyses the reaction a (2E,4Z)-dienoyl-CoA + NADPH + H(+) = a 4,5-saturated-(3E)-enoyl-CoA + NADP(+). The catalysed reaction is a (2E,4E)-dienoyl-CoA + NADPH + H(+) = a 4,5-saturated-(3E)-enoyl-CoA + NADP(+). The enzyme catalyses (2E,4E)-hexadienoyl-CoA + NADPH + H(+) = (3E)-hexenoyl-CoA + NADP(+). It carries out the reaction (2E,4E)-decadienoyl-CoA + NADPH + H(+) = (3E)-decenoyl-CoA + NADP(+). It catalyses the reaction (2E,4Z,7Z,10Z,13Z,16Z,19Z)-docosaheptaenoyl-CoA + NADPH + H(+) = (3E,7Z,10Z,13Z,16Z,19Z)-docosahexaenoyl-CoA + NADP(+). Functionally, auxiliary enzyme of beta-oxidation. Participates in the degradation of unsaturated fatty enoyl-CoA esters having double bonds in both even- and odd-numbered positions in peroxisome. Catalyzes the NADP-dependent reduction of 2,4-dienoyl-CoA to yield trans-3-enoyl-CoA. Has activity towards short and medium chain 2,4-dienoyl-CoAs, but also towards 2,4,7,10,13,16,19-docosaheptaenoyl-CoA, suggesting that it does not constitute a rate limiting step in the peroxisomal degradation of docosahexaenoic acid. In Pongo abelii (Sumatran orangutan), this protein is Peroxisomal 2,4-dienoyl-CoA reductase [(3E)-enoyl-CoA-producing] (DECR2).